The chain runs to 436 residues: C4-dicarboxylate transport protein 2 (436 aa).

9 helical membrane passes run 14–34 (VLVA…TAVA), 45–65 (LIKM…IAGM), 77–97 (MALL…LVVV), 142–162 (VVGA…VLFG), 198–218 (PIGA…GSLV), 223–243 (LMLC…GGIA), 290–310 (VVGL…SIYL), 331–351 (ITLL…TGSG), and 353–373 (IVLA…LALI). Residues 414 to 436 (ELAGEGNASSPASDIPVGGREAV) form a disordered region.

The protein belongs to the dicarboxylate/amino acid:cation symporter (DAACS) (TC 2.A.23) family.

The protein resides in the cell inner membrane. In terms of biological role, responsible for the transport of dicarboxylates such as succinate, fumarate, and malate from the periplasm across the membrane. This is C4-dicarboxylate transport protein 2 from Pseudomonas aeruginosa (strain UCBPP-PA14).